A 491-amino-acid polypeptide reads, in one-letter code: Ketol-acid reductoisomerase (NADP(+)) (491 aa).

The KARI N-terminal Rossmann domain maps to 15–208 (AQLGKCRFMG…GGHRAGVLES (194 aa)). Residues 45–48 (CGAQ), Arg68, Arg76, Ser78, and 108–110 (DKQ) each bind NADP(+). His132 is a catalytic residue. Gly158 is an NADP(+) binding site. KARI C-terminal knotted domains are found at residues 209-344 (SFVA…TAPQ) and 345-484 (YEGK…MTDM). Mg(2+) contacts are provided by Asp217, Glu221, Glu389, and Glu393. Residue Ser414 participates in substrate binding.

Belongs to the ketol-acid reductoisomerase family. Mg(2+) is required as a cofactor.

The enzyme catalyses (2R)-2,3-dihydroxy-3-methylbutanoate + NADP(+) = (2S)-2-acetolactate + NADPH + H(+). It catalyses the reaction (2R,3R)-2,3-dihydroxy-3-methylpentanoate + NADP(+) = (S)-2-ethyl-2-hydroxy-3-oxobutanoate + NADPH + H(+). Its pathway is amino-acid biosynthesis; L-isoleucine biosynthesis; L-isoleucine from 2-oxobutanoate: step 2/4. It participates in amino-acid biosynthesis; L-valine biosynthesis; L-valine from pyruvate: step 2/4. Involved in the biosynthesis of branched-chain amino acids (BCAA). Catalyzes an alkyl-migration followed by a ketol-acid reduction of (S)-2-acetolactate (S2AL) to yield (R)-2,3-dihydroxy-isovalerate. In the isomerase reaction, S2AL is rearranged via a Mg-dependent methyl migration to produce 3-hydroxy-3-methyl-2-ketobutyrate (HMKB). In the reductase reaction, this 2-ketoacid undergoes a metal-dependent reduction by NADPH to yield (R)-2,3-dihydroxy-isovalerate. The sequence is that of Ketol-acid reductoisomerase (NADP(+)) from Shigella flexneri.